A 218-amino-acid chain; its full sequence is Imidazole glycerol phosphate synthase subunit HisH (218 aa).

The region spanning 5-213 (RLAVIDYEAG…VEFVARCSPL (209 aa)) is the Glutamine amidotransferase type-1 domain. Cysteine 83 (nucleophile) is an active-site residue. Catalysis depends on residues histidine 188 and glutamate 190.

Heterodimer of HisH and HisF.

Its subcellular location is the cytoplasm. It carries out the reaction 5-[(5-phospho-1-deoxy-D-ribulos-1-ylimino)methylamino]-1-(5-phospho-beta-D-ribosyl)imidazole-4-carboxamide + L-glutamine = D-erythro-1-(imidazol-4-yl)glycerol 3-phosphate + 5-amino-1-(5-phospho-beta-D-ribosyl)imidazole-4-carboxamide + L-glutamate + H(+). The enzyme catalyses L-glutamine + H2O = L-glutamate + NH4(+). It functions in the pathway amino-acid biosynthesis; L-histidine biosynthesis; L-histidine from 5-phospho-alpha-D-ribose 1-diphosphate: step 5/9. Functionally, IGPS catalyzes the conversion of PRFAR and glutamine to IGP, AICAR and glutamate. The HisH subunit catalyzes the hydrolysis of glutamine to glutamate and ammonia as part of the synthesis of IGP and AICAR. The resulting ammonia molecule is channeled to the active site of HisF. This chain is Imidazole glycerol phosphate synthase subunit HisH, found in Synechococcus sp. (strain JA-2-3B'a(2-13)) (Cyanobacteria bacterium Yellowstone B-Prime).